An 80-amino-acid chain; its full sequence is Exodeoxyribonuclease 7 small subunit (80 aa).

Belongs to the XseB family. As to quaternary structure, heterooligomer composed of large and small subunits.

It is found in the cytoplasm. The catalysed reaction is Exonucleolytic cleavage in either 5'- to 3'- or 3'- to 5'-direction to yield nucleoside 5'-phosphates.. Its function is as follows. Bidirectionally degrades single-stranded DNA into large acid-insoluble oligonucleotides, which are then degraded further into small acid-soluble oligonucleotides. The chain is Exodeoxyribonuclease 7 small subunit from Vibrio atlanticus (strain LGP32) (Vibrio splendidus (strain Mel32)).